The following is a 160-amino-acid chain: Urease accessory protein UreE (160 aa).

Belongs to the UreE family.

The protein resides in the cytoplasm. Functionally, involved in urease metallocenter assembly. Binds nickel. Probably functions as a nickel donor during metallocenter assembly. The chain is Urease accessory protein UreE from Acinetobacter baumannii (strain AB307-0294).